The following is a 267-amino-acid chain: E3 SUMO-protein ligase MMS21 (267 aa).

Residues 169-256 form an SP-RING-type zinc finger; that stretch reads DEDDLQIEGG…IAKMKESQEQ (88 aa). 4 residues coordinate Zn(2+): Cys-200, His-202, Cys-221, and Cys-226.

It belongs to the NSE2 family. In terms of assembly, component of the Smc5-Smc6 complex which consists of KRE29, NSE1, NSE2/MMS21, NSE3, NSE4, NSE5, SMC5 and SMC6.

The protein resides in the nucleus. It localises to the cytoplasm. It participates in protein modification; protein sumoylation. In terms of biological role, acts as an E3 ligase mediating SUMO/Smt3 attachment to SMC5 and YKU70. Acts in a DNA repair pathway for removal of UV-induced DNA damage that is distinct from classical nucleotide excision repair and in repair of ionizing radiation damage. Functions in homologous recombination repair of DNA double strand breaks and in recovery of stalled replication forks. The chain is E3 SUMO-protein ligase MMS21 (MMS21) from Saccharomyces cerevisiae (strain ATCC 204508 / S288c) (Baker's yeast).